Reading from the N-terminus, the 465-residue chain is Iron-sulfur cluster assembly SufBD family protein SH2035 (465 aa).

This sequence belongs to the iron-sulfur cluster assembly SufBD family.

The chain is Iron-sulfur cluster assembly SufBD family protein SH2035 from Staphylococcus haemolyticus (strain JCSC1435).